The following is a 339-amino-acid chain: Ketol-acid reductoisomerase (NADP(+)) (339 aa).

One can recognise a KARI N-terminal Rossmann domain in the interval 1 to 182 (MRVYYDRDAD…GGGRSGIIET (182 aa)). Residues 24-27 (YGSQ), K48, S51, T53, and 83-86 (DELQ) contribute to the NADP(+) site. H108 is a catalytic residue. An NADP(+)-binding site is contributed by G134. Positions 183–328 (NFKEECETDL…AKLRGMMPWI (146 aa)) constitute a KARI C-terminal knotted domain. D191, E195, E227, and E231 together coordinate Mg(2+). S252 contributes to the substrate binding site.

Belongs to the ketol-acid reductoisomerase family. Mg(2+) serves as cofactor.

The catalysed reaction is (2R)-2,3-dihydroxy-3-methylbutanoate + NADP(+) = (2S)-2-acetolactate + NADPH + H(+). It carries out the reaction (2R,3R)-2,3-dihydroxy-3-methylpentanoate + NADP(+) = (S)-2-ethyl-2-hydroxy-3-oxobutanoate + NADPH + H(+). It functions in the pathway amino-acid biosynthesis; L-isoleucine biosynthesis; L-isoleucine from 2-oxobutanoate: step 2/4. It participates in amino-acid biosynthesis; L-valine biosynthesis; L-valine from pyruvate: step 2/4. Its function is as follows. Involved in the biosynthesis of branched-chain amino acids (BCAA). Catalyzes an alkyl-migration followed by a ketol-acid reduction of (S)-2-acetolactate (S2AL) to yield (R)-2,3-dihydroxy-isovalerate. In the isomerase reaction, S2AL is rearranged via a Mg-dependent methyl migration to produce 3-hydroxy-3-methyl-2-ketobutyrate (HMKB). In the reductase reaction, this 2-ketoacid undergoes a metal-dependent reduction by NADPH to yield (R)-2,3-dihydroxy-isovalerate. This chain is Ketol-acid reductoisomerase (NADP(+)), found in Agrobacterium fabrum (strain C58 / ATCC 33970) (Agrobacterium tumefaciens (strain C58)).